The sequence spans 579 residues: Folliculin (579 aa).

Residues 30 to 81 form a disordered region; that stretch reads PQGDGNEDSPGQGEQAEEEEGGIQMNSRMRAHSPAEGASVESSSPGPKKSDM. S62 and S73 each carry phosphoserine. A uDENN FLCN/SMCR8-type domain is found at 86 to 242; that stretch reads RSLAAGHPGY…RNGNAARSLT (157 aa). The tract at residues 210–220 is essential for interaction with LDHA; it reads AEQFGCPQRAQ. The stretch at 287-310 forms a coiled coil; that stretch reads EKLADLEEESESWDNSEAEEEEKA. A compositionally biased stretch (acidic residues) spans 294–308; it reads EESESWDNSEAEEEE. The disordered stretch occupies residues 294–337; that stretch reads EESESWDNSEAEEEEKAPVLPESTEGRELTQGPAESSSLSGCGS. S302 is subject to Phosphoserine. Over residues 326-336 the composition is skewed to polar residues; it reads PAESSSLSGCG. Positions 339–491 constitute a cDENN FLCN/SMCR8-type domain; sequence QPRKLPVFKS…ILNKIEAALT (153 aa). Phosphoserine; by ULK1 occurs at positions 406, 537, and 542. The region spanning 493 to 558 is the dDENN FLCN/SMCR8-type domain; that stretch reads QNLSVDVVDQ…LLKFWMTGLS (66 aa). Residue S571 is modified to Phosphoserine.

The protein belongs to the folliculin family. In terms of assembly, interacts (via C-terminus) with FNIP1 or FNIP2 (via C-terminus). Component of the lysosomal folliculin complex (LFC), composed of FLCN, FNIP1 (or FNIP2), RagA/RRAGA or RagB/RRAGB GDP-bound, RagC/RRAGC or RagD/RRAGD GTP-bound, and Ragulator. Interaction with FNIP1 or FNIP2 mediates indirect interaction with the PRKAA1, PRKAB1 and PRKAG1 subunits of 5'-AMP-activated protein kinase (AMPK). Interacts with HSP90AA1 in the presence of FNIP1. Interacts with HSP70, STUB1, CDC37, AHSA1, CCT2, STIP1, PTGES3 and PPP5C. Interacts with GABARAP; interaction takes place in the presence of FNIP1 and/or FNIP2. Interacts with RILP; the interaction is direct and promotes association between RILP and RAB34. Interacts with KIF3A and KIF3B. Interacts with lactate dehydrogenase LDHA, but not LDHB; the interaction is direct, may preferentially bind LDHA dimers rather than tetramers, and regulates LDHA activity, acting as an uncompetitive inhibitor. Post-translationally, phosphorylation by ULK1 modulates the interaction with GABARAP and is required to regulate autophagy. In terms of tissue distribution, expressed in most tissues tested, including skin, lung, kidney, heart, testis and stomach.

It is found in the lysosome membrane. It localises to the cytoplasm. Its subcellular location is the cytosol. The protein localises to the cell projection. The protein resides in the cilium. It is found in the cytoskeleton. It localises to the microtubule organizing center. Its subcellular location is the centrosome. The protein localises to the spindle. The protein resides in the nucleus. With respect to regulation, GTPase-activating activity is inhibited in the folliculin complex (LFC), which stabilizes the GDP-bound state of RagA/RRAGA (or RagB/RRAGB), because Arg-164 is located far from the RagC/RRAGC or RagD/RRAGD nucleotide pocket. Disassembly of the LFC complex upon amino acid restimulation liberates the GTPase-activating activity. Multi-functional protein, involved in both the cellular response to amino acid availability and in the regulation of glycolysis. GTPase-activating protein that plays a key role in the cellular response to amino acid availability through regulation of the non-canonical mTORC1 signaling cascade controlling the MiT/TFE factors TFEB and TFE3. Activates mTORC1 by acting as a GTPase-activating protein: specifically stimulates GTP hydrolysis by RagC/RRAGC or RagD/RRAGD, promoting the conversion to the GDP-bound state of RagC/RRAGC or RagD/RRAGD, and thereby activating the kinase activity of mTORC1. The GTPase-activating activity is inhibited during starvation and activated in presence of nutrients. Acts as a key component for non-canonical mTORC1-dependent control of the MiT/TFE factors TFEB and TFE3, while it is not involved in mTORC1-dependent phosphorylation of canonical RPS6KB1/S6K1 and EIF4EBP1/4E-BP1. In low-amino acid conditions, the lysosomal folliculin complex (LFC) is formed on the membrane of lysosomes, which inhibits the GTPase-activating activity of FLCN, inactivates mTORC1 and maximizes nuclear translocation of TFEB and TFE3. Upon amino acid restimulation, RagA/RRAGA (or RagB/RRAGB) nucleotide exchange promotes disassembly of the LFC complex and liberates the GTPase-activating activity of FLCN, leading to activation of mTORC1 and subsequent cytoplasmic retention of TFEB and TFE3. Indirectly acts as a positive regulator of Wnt signaling by promoting mTOR-dependent cytoplasmic retention of MiT/TFE factor TFE3. Required for the exit of hematopoietic stem cell from pluripotency by promoting mTOR-dependent cytoplasmic retention of TFE3, thereby increasing Wnt signaling. Acts as an inhibitor of browning of adipose tissue by regulating mTOR-dependent cytoplasmic retention of TFE3. Involved in the control of embryonic stem cells differentiation; together with LAMTOR1 it is necessary to recruit and activate RagC/RRAGC and RagD/RRAGD at the lysosomes, and to induce exit of embryonic stem cells from pluripotency via non-canonical, mTOR-independent TFE3 inactivation. In response to flow stress, regulates STK11/LKB1 accumulation and mTORC1 activation through primary cilia: may act by recruiting STK11/LKB1 to primary cilia for activation of AMPK resided at basal bodies, causing mTORC1 down-regulation. Together with FNIP1 and/or FNIP2, regulates autophagy: following phosphorylation by ULK1, interacts with GABARAP and promotes autophagy. Required for starvation-induced perinuclear clustering of lysosomes by promoting association of RILP with its effector RAB34. Regulates glycolysis by binding to lactate dehydrogenase LDHA, acting as an uncompetitive inhibitor. This is Folliculin from Homo sapiens (Human).